We begin with the raw amino-acid sequence, 254 residues long: Probable transcriptional regulatory protein Saro_0419 (254 aa).

The span at 1–14 (MAGHSKFKNIMHRK) shows a compositional bias: basic residues. A disordered region spans residues 1-22 (MAGHSKFKNIMHRKGAQDKKRS).

This sequence belongs to the TACO1 family.

It localises to the cytoplasm. The chain is Probable transcriptional regulatory protein Saro_0419 from Novosphingobium aromaticivorans (strain ATCC 700278 / DSM 12444 / CCUG 56034 / CIP 105152 / NBRC 16084 / F199).